The chain runs to 177 residues: Large ribosomal subunit protein uL6 (177 aa).

It belongs to the universal ribosomal protein uL6 family. In terms of assembly, part of the 50S ribosomal subunit.

Its function is as follows. This protein binds to the 23S rRNA, and is important in its secondary structure. It is located near the subunit interface in the base of the L7/L12 stalk, and near the tRNA binding site of the peptidyltransferase center. The polypeptide is Large ribosomal subunit protein uL6 (Neisseria meningitidis serogroup C (strain 053442)).